Here is a 203-residue protein sequence, read N- to C-terminus: uncharacterized protein (203 aa).

The chain crosses the membrane as a helical span at residues 9–29 (LVVLFTIVTFGLVSPPAALMA).

It localises to the membrane. This is an uncharacterized protein from Bacillus subtilis (strain 168).